We begin with the raw amino-acid sequence, 161 residues long: Globin CTT-VIIB-5/CTT-VIIB-9 (161 aa).

The N-terminal stretch at 1–16 is a signal peptide; the sequence is MKFFAVLALCIVGAIA. The Globin domain maps to 18-161; that stretch reads PLTADEASLV…NTFAIVVPRL (144 aa). 2 residues coordinate heme b: histidine 76 and histidine 111.

Belongs to the globin family. As to quaternary structure, homodimer.

The sequence is that of Globin CTT-VIIB-5/CTT-VIIB-9 (CTT-7B5) from Chironomus thummi thummi (Midge).